A 337-amino-acid polypeptide reads, in one-letter code: MNGLGGLNKSPEGVVIGLVQLQLPNVVTRADLARQTERIVWMVGKARRNLSTMDLVVFPEYSLHGLSMDTNPEIMCRLDGPEVTAFKKACVDNRIWGCFSIMEFNPHGNPYNSGLIIDDHGEIKLYYRKLHPWIPVEPWEPGDIGIPVIEGPKGARIALIICHDGMFPEMARECAYKGAEIMIRTAGYTAPIREAWRFTNQANSFQNLMVTANVCMCGSDGSFDSMGEGMIVNFDGAVLAHGTTGRADEIITAEVRPDLVREARINWGVENNIYQLWHRGYVAVKGGAMDCPYTFMQDMVAGTFRLPWEDQVKVTDGSSCGFPAPTRMYGKTAKAAE.

The region spanning 14–257 is the CN hydrolase domain; sequence VVIGLVQLQL…DEIITAEVRP (244 aa). Glu60 (proton acceptor) is an active-site residue. The Proton donor role is filled by Lys129. The active-site Nucleophile is Cys162.

Belongs to the carbon-nitrogen hydrolase superfamily. Aliphatic amidase family.

It carries out the reaction formamide + H2O = formate + NH4(+). Is an aliphatic amidase with a restricted substrate specificity, as it only hydrolyzes formamide. The polypeptide is Formamidase (Bradyrhizobium diazoefficiens (strain JCM 10833 / BCRC 13528 / IAM 13628 / NBRC 14792 / USDA 110)).